The chain runs to 101 residues: Precursor of CEP6 (101 aa).

The N-terminal stretch at 1–26 is a signal peptide; sequence MKLSVYIILSILFISTVFYEIQFTEA. Positions 27–48 are excised as a propeptide; it reads RQLRKTDDQDHDDHHFTVGYTD. Basic and acidic residues predominate over residues 29–42; that stretch reads LRKTDDQDHDDHHF. The disordered stretch occupies residues 29–101; the sequence is LRKTDDQDHD…HAVKNNEPNA (73 aa). Hydroxyproline is present on residues Pro-52, Pro-55, and Pro-59. The propeptide occupies 64 to 77; it reads KMKENEENAGGYKD. A compositionally biased stretch (basic and acidic residues) spans 64 to 79; the sequence is KMKENEENAGGYKDDF. Hydroxyproline occurs at positions 81, 84, and 88. Residues 93-101 constitute a propeptide that is removed on maturation; the sequence is AVKNNEPNA.

This sequence belongs to the C-terminally encoded plant signaling peptide (CEP) family. Interacts with CEP receptors (e.g. CEPR1 and CEPR2). The mature small signaling peptide is generated by proteolytic processing of the longer precursor. Expressed in lateral root primordia and in lateral roots excluding the meristem region. Also present in the aerial tissues, such as leaf petioles and the shoot apex region.

The protein localises to the secreted. It is found in the extracellular space. It localises to the apoplast. Functionally, extracellular signaling peptide that represses primary root growth rate. Modulates leaf morphology. Regulates systemic nitrogen (N)-demand signaling. Mediates up-regulation of genes involved in N uptake and assimilation pathways. This chain is Precursor of CEP6, found in Arabidopsis thaliana (Mouse-ear cress).